The primary structure comprises 282 residues: Ribosomal RNA small subunit methyltransferase A (282 aa).

S-adenosyl-L-methionine is bound by residues His-15, Leu-17, Gly-42, Glu-64, Asp-89, and Asn-109.

It belongs to the class I-like SAM-binding methyltransferase superfamily. rRNA adenine N(6)-methyltransferase family. RsmA subfamily.

Its subcellular location is the cytoplasm. It catalyses the reaction adenosine(1518)/adenosine(1519) in 16S rRNA + 4 S-adenosyl-L-methionine = N(6)-dimethyladenosine(1518)/N(6)-dimethyladenosine(1519) in 16S rRNA + 4 S-adenosyl-L-homocysteine + 4 H(+). Specifically dimethylates two adjacent adenosines (A1518 and A1519) in the loop of a conserved hairpin near the 3'-end of 16S rRNA in the 30S particle. May play a critical role in biogenesis of 30S subunits. This Prochlorococcus marinus (strain MIT 9211) protein is Ribosomal RNA small subunit methyltransferase A.